Here is a 248-residue protein sequence, read N- to C-terminus: Ubiquinone biosynthesis O-methyltransferase (248 aa).

The S-adenosyl-L-methionine site is built by Arg41, Gly72, Asp93, and Met136.

This sequence belongs to the methyltransferase superfamily. UbiG/COQ3 family.

The enzyme catalyses a 3-demethylubiquinol + S-adenosyl-L-methionine = a ubiquinol + S-adenosyl-L-homocysteine + H(+). It catalyses the reaction a 3-(all-trans-polyprenyl)benzene-1,2-diol + S-adenosyl-L-methionine = a 2-methoxy-6-(all-trans-polyprenyl)phenol + S-adenosyl-L-homocysteine + H(+). It functions in the pathway cofactor biosynthesis; ubiquinone biosynthesis. In terms of biological role, O-methyltransferase that catalyzes the 2 O-methylation steps in the ubiquinone biosynthetic pathway. This Sinorhizobium fredii (strain NBRC 101917 / NGR234) protein is Ubiquinone biosynthesis O-methyltransferase.